We begin with the raw amino-acid sequence, 418 residues long: Gamma-glutamyl phosphate reductase (418 aa).

Belongs to the gamma-glutamyl phosphate reductase family.

It localises to the cytoplasm. The enzyme catalyses L-glutamate 5-semialdehyde + phosphate + NADP(+) = L-glutamyl 5-phosphate + NADPH + H(+). Its pathway is amino-acid biosynthesis; L-proline biosynthesis; L-glutamate 5-semialdehyde from L-glutamate: step 2/2. Catalyzes the NADPH-dependent reduction of L-glutamate 5-phosphate into L-glutamate 5-semialdehyde and phosphate. The product spontaneously undergoes cyclization to form 1-pyrroline-5-carboxylate. The sequence is that of Gamma-glutamyl phosphate reductase from Pelobacter propionicus (strain DSM 2379 / NBRC 103807 / OttBd1).